The primary structure comprises 354 residues: MTSCGCLVLEKVEDHGGEAAGRGRGRLAQGGGGGGGGCGSCAGEWRSRSETMFPIYVMGSSRASSAAAARGIVDAAGDPIWEAVKSEAKSEAEKEPILSSFLYASVLSHDCLERALSFVLANRLEDPTLLATQLIDIFNDVMMNNKDIRRSIRLDAQAFKDRDPACAQYSWALLYLKGYHSVQSYRIAHVLWNQGRKVLALALQSRISEVFAVDIHPAARIGEGILLDHGTGLVIGETAIVGNWVSLMQGVTLGGTGKENGDRHPKIGQGALLGAGATILGNINVGEGAMIAAGSLVLKDVPPHSMAVGNPAKVVGYKDKEDPSLTMKHDARRDYFEHVAVSFSDDKANGSVVK.

The protein belongs to the transferase hexapeptide repeat family. As to quaternary structure, homomultimer.

The catalysed reaction is L-serine + acetyl-CoA = O-acetyl-L-serine + CoA. Its pathway is amino-acid biosynthesis; L-cysteine biosynthesis; L-cysteine from L-serine: step 1/2. This chain is Probable serine acetyltransferase 2 (SAT2), found in Oryza sativa subsp. japonica (Rice).